Consider the following 359-residue polypeptide: Phosphoserine aminotransferase (359 aa).

Arg42 lines the L-glutamate pocket. Residues 76–77, Trp102, Thr151, Asp170, and Gln193 contribute to the pyridoxal 5'-phosphate site; that span reads AS. An N6-(pyridoxal phosphate)lysine modification is found at Lys194. 235–236 serves as a coordination point for pyridoxal 5'-phosphate; it reads NT.

Belongs to the class-V pyridoxal-phosphate-dependent aminotransferase family. SerC subfamily. In terms of assembly, homodimer. It depends on pyridoxal 5'-phosphate as a cofactor.

It localises to the cytoplasm. The enzyme catalyses O-phospho-L-serine + 2-oxoglutarate = 3-phosphooxypyruvate + L-glutamate. It carries out the reaction 4-(phosphooxy)-L-threonine + 2-oxoglutarate = (R)-3-hydroxy-2-oxo-4-phosphooxybutanoate + L-glutamate. Its pathway is amino-acid biosynthesis; L-serine biosynthesis; L-serine from 3-phospho-D-glycerate: step 2/3. The protein operates within cofactor biosynthesis; pyridoxine 5'-phosphate biosynthesis; pyridoxine 5'-phosphate from D-erythrose 4-phosphate: step 3/5. In terms of biological role, catalyzes the reversible conversion of 3-phosphohydroxypyruvate to phosphoserine and of 3-hydroxy-2-oxo-4-phosphonooxybutanoate to phosphohydroxythreonine. The chain is Phosphoserine aminotransferase (serC) from Bacillus subtilis (strain 168).